Consider the following 1879-residue polypeptide: Protein TIC 214 (1879 aa).

Helical transmembrane passes span 18-38 (IINS…FSIG), 64-84 (FITG…HLAL), 87-107 (PYTI…WTNP), 124-144 (LSIQ…HFIL), 172-192 (VGWL…LVWI), and 218-238 (IAPI…GRIP). Disordered stretches follow at residues 245 to 305 (ETSK…IDET) and 586 to 702 (ISTS…DEPM). 2 stretches are compositionally biased toward acidic residues: residues 253 to 268 (AETE…EIET) and 295 to 305 (EKEDPDKIDET). A compositionally biased stretch (low complexity) spans 586–688 (ISTSTPTSTP…SIPASTSTST (103 aa)). Basic and acidic residues predominate over residues 691 to 701 (IKSKDEPKDEP).

Belongs to the TIC214 family. As to quaternary structure, part of the Tic complex.

Its subcellular location is the plastid. It localises to the chloroplast inner membrane. Involved in protein precursor import into chloroplasts. May be part of an intermediate translocation complex acting as a protein-conducting channel at the inner envelope. The chain is Protein TIC 214 from Cucumis sativus (Cucumber).